A 312-amino-acid chain; its full sequence is uncharacterized protein (312 aa).

2 consecutive transmembrane segments (helical) span residues 4 to 24 (AIYLLILCIFGLFSVYFTYAE) and 286 to 306 (YLLSFIGIIIGFGIIGLAIYL).

Its subcellular location is the cell membrane. This is an uncharacterized protein from Methanocaldococcus jannaschii (strain ATCC 43067 / DSM 2661 / JAL-1 / JCM 10045 / NBRC 100440) (Methanococcus jannaschii).